The chain runs to 1196 residues: Homeodomain-interacting protein kinase 2 (1196 aa).

Ser-16 is modified (phosphoserine). A Glycyl lysine isopeptide (Lys-Gly) (interchain with G-Cter in SUMO); alternate cross-link involves residue Lys-32. Residue Lys-32 forms a Glycyl lysine isopeptide (Lys-Gly) (interchain with G-Cter in SUMO2); alternate linkage. Residues 50 to 69 (VYSQSKNIPPSQPASTTVST) are disordered. Residues 97-230 (SASSTSVTGQ…TNEIVAIKIL (134 aa)) form a transcriptional corepression region. A phosphoserine mark is found at Ser-118 and Ser-135. Position 141 is a phosphothreonine (Thr-141). Residues 189–520 (HEVLCSMTNT…DADKRVTPIE (332 aa)) form an interaction with DAXX region. Residues 199–527 (YEVLEFLGRG…PIETLNHPFV (329 aa)) form the Protein kinase domain. ATP is bound by residues 205-213 (LGRGTFGQV) and Lys-228. Thr-252 and Thr-273 each carry phosphothreonine. Asp-324 functions as the Proton acceptor in the catalytic mechanism. Tyr-361 is subject to Phosphotyrosine; by autocatalysis. At Ser-441 the chain carries Phosphoserine. Residues Thr-482, Thr-517, and Thr-566 each carry the phosphothreonine modification. Residues 539–844 (AHVKSCFQNM…KENTPPRCAM (306 aa)) form an interaction with SKI and SMAD1 region. The interval 600–800 (SATLSLANPE…MRQQPTSTTS (201 aa)) is interaction with DAZAP2. Ser-634 and Ser-668 each carry phosphoserine. Residue Thr-687 is modified to Phosphothreonine. The tract at residues 752-897 (RNTHAHGSHY…ITISSDTDEE (146 aa)) is interaction with POU4F1. An interaction with CTBP1 region spans residues 774–876 (HVTLPAAQPL…TRERQRQTIV (103 aa)). The tract at residues 787–897 (VAHVMRQQPT…ITISSDTDEE (111 aa)) is interaction with HMGA1. 2 disordered regions span residues 792-847 (RQQP…MVHS) and 891-963 (SSDT…CTGN). A compositionally biased stretch (polar residues) spans 793–829 (QQPTSTTSSRKSKQHQSSVRNVSTCEVTSSQAISSPQ). The short motif at 802–805 (RKSK) is the Nuclear localization signal 1 (NLS1) element. Phosphoserine occurs at positions 815 and 827. The Nuclear localization signal 2 (NLS2) motif lies at 832 to 835 (KRVK). The interaction with TP53 and TP73 stretch occupies residues 839 to 934 (PPRCAMVHSS…PYSDSSSNTS (96 aa)). The tract at residues 873–907 (QTIVIPDTPSPTVSVITISSDTDEEEEQKHAPTST) is interaction with UBE2I. A localization to nuclear speckles region spans residues 873 to 980 (QTIVIPDTPS…PLKTQASEVL (108 aa)). Positions 873–980 (QTIVIPDTPS…PLKTQASEVL (108 aa)) are required for localization to nuclear speckles. The SUMO interaction motifs (SIM); required for nuclear localization and kinase activity stretch occupies residues 884-908 (TVSVITISSDTDEEEEQKHAPTSTV). Low complexity predominate over residues 923 to 937 (DSPYSDSSSNTSPYS). Ser-934 carries the post-translational modification Phosphoserine. The interaction with AXIN1 stretch occupies residues 935-1050 (PYSVQQRTGH…LSQAQQHMAA (116 aa)). Polar residues predominate over residues 938–951 (VQQRTGHNGTNTLD). Residues Lys-953 and Lys-973 each participate in a glycyl lysine isopeptide (Lys-Gly) (interchain with G-Cter in SUMO2) cross-link. The segment at 984 to 1196 (DSLGPAISAS…PAKVNQYPYI (213 aa)) is autoinhibitory domain (AID). 5 positions are modified to phosphoserine: Ser-991, Ser-993, Ser-1042, Ser-1153, and Ser-1186. The segment covering 991–1046 (SASHHSSSFKSKSSSTVTSTSGHSSGSSSGAIAYRQQRPGPHFQQQQPLNLSQAQQ) has biased composition (low complexity). Positions 991-1058 (SASHHSSSFK…AADRTGSHRR (68 aa)) are disordered. Residue Lys-1189 forms a Glycyl lysine isopeptide (Lys-Gly) (interchain with G-Cter in SUMO) linkage.

The protein belongs to the protein kinase superfamily. CMGC Ser/Thr protein kinase family. HIPK subfamily. As to quaternary structure, interacts with CREB1, SIAH1, WSB1, CBX4, TRADD, p53/TP53, TP73, TP63, CREBBP, DAXX, P53DINP1, SKI, SMAD1, SMAD2 and SMAD3, but not SMAD4. Interacts with SP100; positively regulates TP53-dependent transcription. Interacts with ATF1, PML, RUNX1, EP300, NKX1-2, NKX2-5, UBE2I, HMGA1, CTBP1, AXIN1, NLK, MYB, POU4F1, POU4F2, POU4F3, UBE2I, UBL1 and ZBTB4. Probably part of a complex consisting of p53/TP53, HIPK2 and AXIN1. Interacts with DAZAP2; the interaction results in phosphorylation of DAZAP2 which causes localization of DAZAP2 to the nucleus, reduces interaction of DAZAP2 with HIPK2 and prevents DAZAP2-dependent degradation of HIPK2. Interacts with SIAH1; the interaction is promoted by DAZAP2 and results in SIAH1-mediated ubiquitination and subsequent proteasomal degradation of HIPK2. Interacts with SPN/CD43 cytoplasmic tail. Post-translationally, sumoylated. When conjugated it is directed to nuclear speckles. Desumoylated by SENP1. Sumoylation on Lys-32 is promoted by the E3 SUMO-protein ligase CBX4. In terms of processing, autophosphorylation at Tyr-361 in the activation loop activates the kinase and promotes nuclear localization. Ubiquitinated by FBXO3, WSB1 and SIAH1, leading to rapid proteasome-dependent degradation. The degradation mediated by FBXO3, but not ubiquitination, is prevented in the presence of PML. The degradation mediated by WSB1 and SIAH1 is reversibly reduced upon DNA damage. Post-translationally, cleaved at Asp-923 and Asp-984 by CASP6 in a p53/TP53-dependent manner. The cleaved form lacks the autoinhibitory C-terminal domain (AID), resulting in a hyperactive kinase, which potentiates p53/TP53 Ser-46 phosphorylation and subsequent activation of the cell death machinery. Ubiquitous. Abundant in muscle, heart, small intestine, stomach, kidney and brain; and low in testis, skin and lung.

It is found in the nucleus. The protein localises to the PML body. Its subcellular location is the cytoplasm. The catalysed reaction is L-seryl-[protein] + ATP = O-phospho-L-seryl-[protein] + ADP + H(+). It carries out the reaction L-threonyl-[protein] + ATP = O-phospho-L-threonyl-[protein] + ADP + H(+). Functionally, serine/threonine-protein kinase involved in transcription regulation, p53/TP53-mediated cellular apoptosis and regulation of the cell cycle. Acts as a corepressor of several transcription factors, including SMAD1 and POU4F1/Brn3a and probably NK homeodomain transcription factors. Phosphorylates PDX1, ATF1, PML, p53/TP53, CREB1, CTBP1, CBX4, RUNX1, EP300, CTNNB1, HMGA1, ZBTB4 and DAZAP2. Inhibits cell growth and promotes apoptosis through the activation of p53/TP53 both at the transcription level and at the protein level (by phosphorylation and indirect acetylation). The phosphorylation of p53/TP53 may be mediated by a p53/TP53-HIPK2-AXIN1 complex. Involved in the response to hypoxia by acting as a transcriptional co-suppressor of HIF1A. Mediates transcriptional activation of TP73. In response to TGFB, cooperates with DAXX to activate JNK. Negative regulator through phosphorylation and subsequent proteasomal degradation of CTNNB1 and the antiapoptotic factor CTBP1. In the Wnt/beta-catenin signaling pathway acts as an intermediate kinase between MAP3K7/TAK1 and NLK to promote the proteasomal degradation of MYB. Phosphorylates CBX4 upon DNA damage and promotes its E3 SUMO-protein ligase activity. Activates CREB1 and ATF1 transcription factors by phosphorylation in response to genotoxic stress. In response to DNA damage, stabilizes PML by phosphorylation. PML, HIPK2 and FBXO3 may act synergically to activate p53/TP53-dependent transactivation. Promotes angiogenesis, and is involved in erythroid differentiation, especially during fetal liver erythropoiesis. Phosphorylation of RUNX1 and EP300 stimulates EP300 transcription regulation activity. Triggers ZBTB4 protein degradation in response to DNA damage. In response to DNA damage, phosphorylates DAZAP2 which localizes DAZAP2 to the nucleus, reduces interaction of DAZAP2 with HIPK2 and prevents DAZAP2-dependent ubiquitination of HIPK2 by E3 ubiquitin-protein ligase SIAH1 and subsequent proteasomal degradation. Modulates HMGA1 DNA-binding affinity. In response to high glucose, triggers phosphorylation-mediated subnuclear localization shifting of PDX1. Involved in the regulation of eye size, lens formation and retinal lamination during late embryogenesis. The chain is Homeodomain-interacting protein kinase 2 (Hipk2) from Mus musculus (Mouse).